Reading from the N-terminus, the 411-residue chain is uncharacterized protein (411 aa).

Residues 32-108 form a disordered region; the sequence is LGGDPAPKPT…PEHPRRIPIP (77 aa).

This is an uncharacterized protein from Ictalurid herpesvirus 1 (strain Auburn) (IcHV-1).